The chain runs to 357 residues: Sulfate/thiosulfate import ATP-binding protein CysA (357 aa).

Residues 3–237 (IVIQNVSKSF…PKSPFVYDFL (235 aa)) enclose the ABC transporter domain. 35–42 (GPSGSGKT) contributes to the ATP binding site.

Belongs to the ABC transporter superfamily. Sulfate/tungstate importer (TC 3.A.1.6) family. The complex is composed of two ATP-binding proteins (CysA), two transmembrane proteins (CysT and CysW) and a solute-binding protein (CysP).

It localises to the cell membrane. The enzyme catalyses sulfate(out) + ATP + H2O = sulfate(in) + ADP + phosphate + H(+). It carries out the reaction thiosulfate(out) + ATP + H2O = thiosulfate(in) + ADP + phosphate + H(+). Part of the ABC transporter complex CysAWTP involved in sulfate/thiosulfate import. Responsible for energy coupling to the transport system. The polypeptide is Sulfate/thiosulfate import ATP-binding protein CysA (Halalkalibacterium halodurans (strain ATCC BAA-125 / DSM 18197 / FERM 7344 / JCM 9153 / C-125) (Bacillus halodurans)).